A 365-amino-acid polypeptide reads, in one-letter code: Chorismate synthase (365 aa).

Residue R48 participates in NADP(+) binding. Residues 125–127, G286, 301–305, and R328 contribute to the FMN site; these read RGS and KPTPS.

It belongs to the chorismate synthase family. FMNH2 is required as a cofactor.

The enzyme catalyses 5-O-(1-carboxyvinyl)-3-phosphoshikimate = chorismate + phosphate. Its pathway is metabolic intermediate biosynthesis; chorismate biosynthesis; chorismate from D-erythrose 4-phosphate and phosphoenolpyruvate: step 7/7. In terms of biological role, catalyzes the anti-1,4-elimination of the C-3 phosphate and the C-6 proR hydrogen from 5-enolpyruvylshikimate-3-phosphate (EPSP) to yield chorismate, which is the branch point compound that serves as the starting substrate for the three terminal pathways of aromatic amino acid biosynthesis. This reaction introduces a second double bond into the aromatic ring system. This chain is Chorismate synthase, found in Methanosphaera stadtmanae (strain ATCC 43021 / DSM 3091 / JCM 11832 / MCB-3).